We begin with the raw amino-acid sequence, 485 residues long: Retron Mx162 reverse transcriptase (485 aa).

The interval 1–33 (MTARLDPFVPAASPQAVPTPELTAPSSDAAAKR) is disordered. A Reverse transcriptase domain is found at 167-407 (RWFAFHREVD…TRQRVTGLVV (241 aa)). The Mg(2+) site is built by D250, D346, and D347.

This sequence belongs to the bacterial reverse transcriptase family.

It carries out the reaction DNA(n) + a 2'-deoxyribonucleoside 5'-triphosphate = DNA(n+1) + diphosphate. Its activity is regulated as follows. msDNA synthesis is inhibited by rifampicin and chloramphenicol. Its function is as follows. Reverse transcriptase (RT) responsible for synthesis of msDNA-Mx162 (a branched molecule with RNA linked by a 2',5'-phosphodiester bond to ssDNA). The retron transcript serves as primer (from a conserved internal G residue) and template for the reaction, and codes for the RT. The retron is involved in antiviral defense. This Myxococcus xanthus protein is Retron Mx162 reverse transcriptase.